A 632-amino-acid chain; its full sequence is Polygalacturonase non-catalytic subunit AroGP3 (632 aa).

The signal sequence occupies residues 1 to 27 (MHTKILLPSCILLLLLFTLSSLDVVVA). The propeptide occupies 28 to 109 (KDGDESGNPF…MCALDLLPSL (82 aa)). 7 N-linked (GlcNAc...) asparagine glycosylation sites follow: Asn-125, Asn-143, Asn-258, Asn-280, Asn-336, Asn-371, and Asn-389. The 215-residue stretch at 417 to 631 (FFREKMLKSG…FENDMTWATA (215 aa)) folds into the BURP domain.

Interacts with polygalacturonase to form heterodimers.

Its subcellular location is the secreted. It is found in the extracellular space. The protein localises to the apoplast. The protein resides in the cell wall. Non-catalytic subunit of polygalacturonase. The polypeptide is Polygalacturonase non-catalytic subunit AroGP3 (GP3) (Solanum lycopersicum (Tomato)).